The sequence spans 210 residues: NADH dehydrogenase [ubiquinone] iron-sulfur protein 8, mitochondrial (210 aa).

The N-terminal 34 residues, 1 to 34 (MRCLTTPMLLRALAQAARAGPPCGRSLHSSAVAA), are a transit peptide targeting the mitochondrion. 4Fe-4S ferredoxin-type domains follow at residues 102–131 (RRYP…IEAE) and 141–170 (TRYD…EGPN). [4Fe-4S] cluster contacts are provided by Cys111, Cys114, Cys117, Cys121, Cys150, Cys153, Cys156, and Cys160.

This sequence belongs to the complex I 23 kDa subunit family. As to quaternary structure, core subunit of respiratory chain NADH dehydrogenase (Complex I) which is composed of 45 different subunits. This is a component of the iron-sulfur (IP) fragment of the enzyme. Interacts with RAB5IF. The cofactor is [4Fe-4S] cluster.

It localises to the mitochondrion inner membrane. It carries out the reaction a ubiquinone + NADH + 5 H(+)(in) = a ubiquinol + NAD(+) + 4 H(+)(out). Functionally, core subunit of the mitochondrial membrane respiratory chain NADH dehydrogenase (Complex I) which catalyzes electron transfer from NADH through the respiratory chain, using ubiquinone as an electron acceptor. Essential for the catalytic activity and assembly of complex I. This is NADH dehydrogenase [ubiquinone] iron-sulfur protein 8, mitochondrial (NDUFS8) from Pongo abelii (Sumatran orangutan).